A 229-amino-acid polypeptide reads, in one-letter code: NAD-dependent protein deacylase (229 aa).

Positions 1–227 constitute a Deacetylase sirtuin-type domain; sequence MKNLVILSGA…QDLMPKLIEM (227 aa). 9–28 is an NAD(+) binding site; that stretch reads GAGISAESGIKTFRDADGLW. Positions 53 and 56 each coordinate substrate. 86-89 provides a ligand contact to NAD(+); sequence QNVD. His-104 (proton acceptor) is an active-site residue. Residue 169-171 coordinates NAD(+); sequence GTS.

It belongs to the sirtuin family. Class III subfamily.

It is found in the cytoplasm. The enzyme catalyses N(6)-acetyl-L-lysyl-[protein] + NAD(+) + H2O = 2''-O-acetyl-ADP-D-ribose + nicotinamide + L-lysyl-[protein]. The catalysed reaction is N(6)-succinyl-L-lysyl-[protein] + NAD(+) + H2O = 2''-O-succinyl-ADP-D-ribose + nicotinamide + L-lysyl-[protein]. Its function is as follows. NAD-dependent lysine deacetylase and desuccinylase that specifically removes acetyl and succinyl groups on target proteins. Modulates the activities of several proteins which are inactive in their acylated form. The protein is NAD-dependent protein deacylase of Helicobacter pylori (strain ATCC 700392 / 26695) (Campylobacter pylori).